The sequence spans 256 residues: MKIYKLDAIVLKSRDMREADKILTVYSIQRGKQRIVAHGAAKPNSRKRGAVQPFCFSEFMLHRGREIDAISQAELKEGFAEIRYDLDRLTAAAYITELLDGFVAEGEPNQNLFSLLYSALHLIAVGNSEMILRGFEAKLLGFSGLQPDLTNCSVCGAEIRETKVSFAVQQGGILCKDCATHEKRILKFSRGTVEVLKTLYRWELTKLQQLKVSEPLKTELSALLRSYIEYYLEKKLKTTEFMDRLYKSNLGRGTNI.

Belongs to the RecO family.

Functionally, involved in DNA repair and RecF pathway recombination. The chain is DNA repair protein RecO from Desulforamulus reducens (strain ATCC BAA-1160 / DSM 100696 / MI-1) (Desulfotomaculum reducens).